Consider the following 228-residue polypeptide: Cytochrome c oxidase subunit 2 (228 aa).

The Mitochondrial intermembrane segment spans residues 1–14 (MANHSQLGFQDASS). Residues 15–45 (PIMEELVEFHDHALIVALAICSLVLYLLAHM) traverse the membrane as a helical segment. Over 46–58 (LMEKLSSNAVDAQ) the chain is Mitochondrial matrix. Residues 59–86 (EVELIWTILPAIVLVLLALPSLQILYMM) form a helical membrane-spanning segment. Over 87–228 (DEIDEPDLTL…ETWSSLLSAS (142 aa)) the chain is Mitochondrial intermembrane. Positions 160, 195, 197, 199, 203, and 206 each coordinate Cu cation. E197 provides a ligand contact to Mg(2+).

This sequence belongs to the cytochrome c oxidase subunit 2 family. As to quaternary structure, component of the cytochrome c oxidase (complex IV, CIV), a multisubunit enzyme composed of 14 subunits. The complex is composed of a catalytic core of 3 subunits MT-CO1, MT-CO2 and MT-CO3, encoded in the mitochondrial DNA, and 11 supernumerary subunits COX4I, COX5A, COX5B, COX6A, COX6B, COX6C, COX7A, COX7B, COX7C, COX8 and NDUFA4, which are encoded in the nuclear genome. The complex exists as a monomer or a dimer and forms supercomplexes (SCs) in the inner mitochondrial membrane with NADH-ubiquinone oxidoreductase (complex I, CI) and ubiquinol-cytochrome c oxidoreductase (cytochrome b-c1 complex, complex III, CIII), resulting in different assemblies (supercomplex SCI(1)III(2)IV(1) and megacomplex MCI(2)III(2)IV(2)). Found in a complex with TMEM177, COA6, COX18, COX20, SCO1 and SCO2. Interacts with TMEM177 in a COX20-dependent manner. Interacts with COX20. Interacts with COX16. It depends on Cu cation as a cofactor.

The protein localises to the mitochondrion inner membrane. The enzyme catalyses 4 Fe(II)-[cytochrome c] + O2 + 8 H(+)(in) = 4 Fe(III)-[cytochrome c] + 2 H2O + 4 H(+)(out). Functionally, component of the cytochrome c oxidase, the last enzyme in the mitochondrial electron transport chain which drives oxidative phosphorylation. The respiratory chain contains 3 multisubunit complexes succinate dehydrogenase (complex II, CII), ubiquinol-cytochrome c oxidoreductase (cytochrome b-c1 complex, complex III, CIII) and cytochrome c oxidase (complex IV, CIV), that cooperate to transfer electrons derived from NADH and succinate to molecular oxygen, creating an electrochemical gradient over the inner membrane that drives transmembrane transport and the ATP synthase. Cytochrome c oxidase is the component of the respiratory chain that catalyzes the reduction of oxygen to water. Electrons originating from reduced cytochrome c in the intermembrane space (IMS) are transferred via the dinuclear copper A center (CU(A)) of subunit 2 and heme A of subunit 1 to the active site in subunit 1, a binuclear center (BNC) formed by heme A3 and copper B (CU(B)). The BNC reduces molecular oxygen to 2 water molecules using 4 electrons from cytochrome c in the IMS and 4 protons from the mitochondrial matrix. In Cairina moschata (Muscovy duck), this protein is Cytochrome c oxidase subunit 2 (MT-CO2).